The following is a 127-amino-acid chain: Glycine cleavage system H protein (127 aa).

Positions 22–104 constitute a Lipoyl-binding domain; it reads KARIGITHFA…YEKAWMIVVE (83 aa). An N6-lipoyllysine modification is found at Lys63.

The protein belongs to the GcvH family. In terms of assembly, the glycine cleavage system is composed of four proteins: P, T, L and H. Requires (R)-lipoate as cofactor.

The glycine cleavage system catalyzes the degradation of glycine. The H protein shuttles the methylamine group of glycine from the P protein to the T protein. Functionally, is also involved in protein lipoylation via its role as an octanoyl/lipoyl carrier protein intermediate. In Bacillus velezensis (strain DSM 23117 / BGSC 10A6 / LMG 26770 / FZB42) (Bacillus amyloliquefaciens subsp. plantarum), this protein is Glycine cleavage system H protein.